Consider the following 522-residue polypeptide: Apolipoprotein N-acyltransferase (522 aa).

Transmembrane regions (helical) follow at residues 17–37 (YFTYLIAIISGLLGVFAFSPF), 61–81 (TALLSTFLWAMGFFCFGVSWL), 98–118 (FLVGLLAAYLALYPMLFTYLV), 127–147 (VIFAVIWTLTEFLRGWIFTGF), 164–184 (IAPIFGVTGLTFFTVWASAVI), and 197–217 (LKLVLANALLLIIVGGLSAYS). One can recognise a CN hydrolase domain in the interval 236–483 (AQGNIEQNLK…ETTLTYKIAP (248 aa)). Glu276 functions as the Proton acceptor in the catalytic mechanism. Residue Lys342 is part of the active site. The active-site Nucleophile is the Cys394. Residues 495-515 (NMPLYALSLLFLLLHSMMAFI) form a helical membrane-spanning segment.

It belongs to the CN hydrolase family. Apolipoprotein N-acyltransferase subfamily.

Its subcellular location is the cell inner membrane. It catalyses the reaction N-terminal S-1,2-diacyl-sn-glyceryl-L-cysteinyl-[lipoprotein] + a glycerophospholipid = N-acyl-S-1,2-diacyl-sn-glyceryl-L-cysteinyl-[lipoprotein] + a 2-acyl-sn-glycero-3-phospholipid + H(+). It functions in the pathway protein modification; lipoprotein biosynthesis (N-acyl transfer). Functionally, catalyzes the phospholipid dependent N-acylation of the N-terminal cysteine of apolipoprotein, the last step in lipoprotein maturation. This chain is Apolipoprotein N-acyltransferase, found in Haemophilus influenzae (strain ATCC 51907 / DSM 11121 / KW20 / Rd).